A 427-amino-acid polypeptide reads, in one-letter code: O-methyltransferase sol2 (427 aa).

S-adenosyl-L-methionine is bound at residue aspartate 281. Histidine 327 serves as the catalytic Proton acceptor.

Belongs to the class I-like SAM-binding methyltransferase superfamily. Cation-independent O-methyltransferase family. COMT subfamily.

It participates in phytotoxin biosynthesis. O-methyltransferase; part of the gene cluster that mediates the biosynthesis of the phytotoxin solanapyrone, a causal agent of early blight disease of potato and tomato. The prosolanapyrone synthase sol1 is a polyketide synthase that produces the octaketide desmethylprosolanapyrone I via sequential condensations of 7 malonyl-CoA units with one acetyl-CoA unit, and one methylation step. The octaketide backbone is further methylated by the sol2 O-methyltransferase to yield prosolanapyrone I. Prosolanapyrone I is hydroxylated to prosolanapyrone II by the cytochrome P450 monooxygenase sol6. The solanapyrone synthase sol5 then catalyzes the oxidation of prosolanapyrone II and the subsequent Diels Alder cycloisomerization of the product prosolanapyrone III to solanapyrones A and D. Solanapyrones A and D are then converted into solanapyrones B and E, respectively, by the sol3 dehydrogenase. The polypeptide is O-methyltransferase sol2 (sol2) (Alternaria solani).